Here is a 155-residue protein sequence, read N- to C-terminus: MGPKLLESRLCLLLLLGLVLMLASCQAQILSQKFYTQHIYNSTYPRCDAVMRVVNRYRPRCKDINTFLHTSFADVVAVCGHPNITCNNLTRKNCHASSFQVFITFCNLTMPTRICTQCRYQTTGSVKYYRVACENRTPQDTPMYPVVPVHLDGTF.

An N-terminal signal peptide occupies residues 1-25 (MGPKLLESRLCLLLLLGLVLMLASC). Residue lysine 33 participates in substrate binding. Catalysis depends on histidine 38, which acts as the Proton acceptor. N-linked (GlcNAc...) asparagine glycosylation occurs at asparagine 41. Disulfide bonds link cysteine 47–cysteine 106, cysteine 61–cysteine 118, cysteine 79–cysteine 133, and cysteine 86–cysteine 94. The residue at position 57 (tyrosine 57) is a 3'-nitrotyrosine. Residue 62-66 (KDINT) participates in substrate binding. 3 N-linked (GlcNAc...) asparagine glycosylation sites follow: asparagine 83, asparagine 88, and asparagine 107. The active-site Proton donor is histidine 150.

Belongs to the pancreatic ribonuclease family. As to quaternary structure, interacts with and forms a tight 1:1 complex with RNH1. Dimerization of two such complexes may occur.

It localises to the lysosome. The protein localises to the cytoplasmic granule. The enzyme catalyses an [RNA] containing cytidine + H2O = an [RNA]-3'-cytidine-3'-phosphate + a 5'-hydroxy-ribonucleotide-3'-[RNA].. The catalysed reaction is an [RNA] containing uridine + H2O = an [RNA]-3'-uridine-3'-phosphate + a 5'-hydroxy-ribonucleotide-3'-[RNA].. Functionally, this is a non-secretory ribonuclease. It is a pyrimidine specific nuclease with a slight preference for U. Cytotoxin and helminthotoxin. Possesses a wide variety of biological activities. This Mus musculus (Mouse) protein is Non-secretory ribonuclease (Rnase2).